Reading from the N-terminus, the 404-residue chain is Tryptophan synthase beta chain (404 aa).

Residue K99 is modified to N6-(pyridoxal phosphate)lysine.

This sequence belongs to the TrpB family. As to quaternary structure, tetramer of two alpha and two beta chains. Pyridoxal 5'-phosphate serves as cofactor.

It catalyses the reaction (1S,2R)-1-C-(indol-3-yl)glycerol 3-phosphate + L-serine = D-glyceraldehyde 3-phosphate + L-tryptophan + H2O. The protein operates within amino-acid biosynthesis; L-tryptophan biosynthesis; L-tryptophan from chorismate: step 5/5. Functionally, the beta subunit is responsible for the synthesis of L-tryptophan from indole and L-serine. The sequence is that of Tryptophan synthase beta chain from Rhizobium rhizogenes (strain K84 / ATCC BAA-868) (Agrobacterium radiobacter).